The chain runs to 885 residues: Glycerol-3-phosphate acyltransferase (885 aa).

Over residues 1–17 (MPEQNPLPFPDGQPSPP) the composition is skewed to pro residues. The interval 1-26 (MPEQNPLPFPDGQPSPPSTAAADTGA) is disordered. An HXXXXD motif motif is present at residues 362-367 (HRSHMD).

Belongs to the GPAT/DAPAT family.

The protein localises to the cell inner membrane. It catalyses the reaction sn-glycerol 3-phosphate + an acyl-CoA = a 1-acyl-sn-glycero-3-phosphate + CoA. The protein operates within phospholipid metabolism; CDP-diacylglycerol biosynthesis; CDP-diacylglycerol from sn-glycerol 3-phosphate: step 1/3. This is Glycerol-3-phosphate acyltransferase from Xanthomonas axonopodis pv. citri (strain 306).